Here is a 242-residue protein sequence, read N- to C-terminus: Probable transcriptional regulatory protein Csac_0964 (242 aa).

Residues 1–20 (MSGHSKWANIRHKKEKTDAQ) form a disordered region.

This sequence belongs to the TACO1 family.

It localises to the cytoplasm. The protein is Probable transcriptional regulatory protein Csac_0964 of Caldicellulosiruptor saccharolyticus (strain ATCC 43494 / DSM 8903 / Tp8T 6331).